The following is a 211-amino-acid chain: Probable nicotinate-nucleotide adenylyltransferase (211 aa).

This sequence belongs to the NadD family.

It carries out the reaction nicotinate beta-D-ribonucleotide + ATP + H(+) = deamido-NAD(+) + diphosphate. It participates in cofactor biosynthesis; NAD(+) biosynthesis; deamido-NAD(+) from nicotinate D-ribonucleotide: step 1/1. Functionally, catalyzes the reversible adenylation of nicotinate mononucleotide (NaMN) to nicotinic acid adenine dinucleotide (NaAD). The polypeptide is Probable nicotinate-nucleotide adenylyltransferase (Legionella pneumophila (strain Corby)).